Here is a 210-residue protein sequence, read N- to C-terminus: Probable GTP-binding protein EngB (210 aa).

The region spanning 30-204 (QGYEVAFAGR…YRVLADWMEL (175 aa)) is the EngB-type G domain. Residues 38-45 (GRSNAGKS), 64-68 (GRTQL), 82-85 (DLPG), 149-152 (TKAD), and 182-185 (LFSA) contribute to the GTP site. The Mg(2+) site is built by serine 45 and threonine 66.

The protein belongs to the TRAFAC class TrmE-Era-EngA-EngB-Septin-like GTPase superfamily. EngB GTPase family. Requires Mg(2+) as cofactor.

Its function is as follows. Necessary for normal cell division and for the maintenance of normal septation. The protein is Probable GTP-binding protein EngB of Pseudomonas putida (strain ATCC 700007 / DSM 6899 / JCM 31910 / BCRC 17059 / LMG 24140 / F1).